The sequence spans 273 residues: NH(3)-dependent NAD(+) synthetase (273 aa).

Residue 34–41 (GLSGGIDS) coordinates ATP. Asp-40 is a Mg(2+) binding site. Arg-116 is a binding site for deamido-NAD(+). Thr-136 is an ATP binding site. Residue Glu-141 participates in Mg(2+) binding. Residues Lys-165 and Ser-187 each coordinate ATP.

This sequence belongs to the NAD synthetase family. Homodimer.

It carries out the reaction deamido-NAD(+) + NH4(+) + ATP = AMP + diphosphate + NAD(+) + H(+). Its pathway is cofactor biosynthesis; NAD(+) biosynthesis; NAD(+) from deamido-NAD(+) (ammonia route): step 1/1. Functionally, catalyzes the ATP-dependent amidation of deamido-NAD to form NAD. Uses ammonia as a nitrogen source. The chain is NH(3)-dependent NAD(+) synthetase from Trichlorobacter lovleyi (strain ATCC BAA-1151 / DSM 17278 / SZ) (Geobacter lovleyi).